The sequence spans 467 residues: MAESNTDSKSSNQMWGGRFASGPDAIMEEINASIGFDKKLFAQDIRGSIAHATMLAHQGIISAEDKDKIVHGLNTILSEIESGNFEFSRRLEDIHMNIEARLATLIGPAAGRLHTARSRNDQVALDFRLWVKEELEKTEKMLTGLIAAFLDRAEEHAESVMPGFTHLQTAQPVTFGHHCMAYVEMFGRDRSRVRHAIEHLDESPIGAAALAGTGYPIDRHMTAKALGFREPTRNSIDTVSDRDFAIEFLAIAAITGMHLSRLAEEIVIWSTPQFGFVRLSDAFSTGSSIMPQKKNPDAAELVRAKTGRINGSLIALLTIMKGLPLAYSKDMQEDKEQVFDAAESLELAIAAMTGMVRDMTVNTARMKAAAGSGFSTATDLADWLVREAGLPFRDAHHVTGRAVALAESKGCDLAELPLADLQAIHPDITDKVYDVLTVEASVASRKSFGGTAPSEVRKQIAFWRARN.

This sequence belongs to the lyase 1 family. Argininosuccinate lyase subfamily.

It localises to the cytoplasm. It catalyses the reaction 2-(N(omega)-L-arginino)succinate = fumarate + L-arginine. The protein operates within amino-acid biosynthesis; L-arginine biosynthesis; L-arginine from L-ornithine and carbamoyl phosphate: step 3/3. In Rhizobium etli (strain CIAT 652), this protein is Argininosuccinate lyase.